Reading from the N-terminus, the 62-residue chain is Sperm histone (62 aa).

Residues 1–62 form a disordered region; it reads MARYRRSRTR…GSRRRRRRRY (62 aa). Threonine 9 carries the phosphothreonine modification.

Belongs to the protamine P1 family. As to expression, testis.

It is found in the nucleus. It localises to the chromosome. Functionally, protamines substitute for histones in the chromatin of sperm during the haploid phase of spermatogenesis. They compact sperm DNA into a highly condensed, stable and inactive complex. This is Sperm histone from Gallus gallus (Chicken).